A 108-amino-acid polypeptide reads, in one-letter code: Translation initiation factor 1A (108 aa).

Positions 11-85 (PSRDVPKPEE…NRCDILYKYG (75 aa)) constitute an S1-like domain.

This sequence belongs to the eIF-1A family.

In terms of biological role, seems to be required for maximal rate of protein biosynthesis. Enhances ribosome dissociation into subunits and stabilizes the binding of the initiator Met-tRNA(I) to 40 S ribosomal subunits. The sequence is that of Translation initiation factor 1A (eIF1A) from Saccharolobus islandicus (strain Y.N.15.51 / Yellowstone #2) (Sulfolobus islandicus).